The chain runs to 118 residues: Large ribosomal subunit protein bL20 (118 aa).

It belongs to the bacterial ribosomal protein bL20 family.

In terms of biological role, binds directly to 23S ribosomal RNA and is necessary for the in vitro assembly process of the 50S ribosomal subunit. It is not involved in the protein synthesizing functions of that subunit. This chain is Large ribosomal subunit protein bL20, found in Aeromonas hydrophila subsp. hydrophila (strain ATCC 7966 / DSM 30187 / BCRC 13018 / CCUG 14551 / JCM 1027 / KCTC 2358 / NCIMB 9240 / NCTC 8049).